Here is a 542-residue protein sequence, read N- to C-terminus: Chaperonin GroEL (542 aa).

Residues 29 to 32 (TLGP), K50, 86 to 90 (DGTTT), G415, and D495 each bind ATP.

This sequence belongs to the chaperonin (HSP60) family. Forms a cylinder of 14 subunits composed of two heptameric rings stacked back-to-back. Interacts with the co-chaperonin GroES.

It localises to the cytoplasm. The catalysed reaction is ATP + H2O + a folded polypeptide = ADP + phosphate + an unfolded polypeptide.. Its function is as follows. Together with its co-chaperonin GroES, plays an essential role in assisting protein folding. The GroEL-GroES system forms a nano-cage that allows encapsulation of the non-native substrate proteins and provides a physical environment optimized to promote and accelerate protein folding. The sequence is that of Chaperonin GroEL from Azobacteroides pseudotrichonymphae genomovar. CFP2.